Here is a 191-residue protein sequence, read N- to C-terminus: Protein YceI (191 aa).

An N-terminal signal peptide occupies residues 1-22; it reads MKKSLLGLTFASLMFSAGSAVA.

It belongs to the UPF0312 family. Type 1 subfamily.

It is found in the periplasm. The chain is Protein YceI from Shigella boydii serotype 4 (strain Sb227).